An 877-amino-acid polypeptide reads, in one-letter code: Kinetochore null protein 2 (877 aa).

The region spanning 20-107 (IRLNLWSMKF…SNGIPENWAD (88 aa)) is the SANTA domain. Disordered regions lie at residues 122 to 315 (RPIQ…SKSV), 338 to 535 (FEST…ESLN), and 549 to 604 (MMFG…NDSI). Residues 153-211 (QKNSENEKERNRREREEQQTKERERRLEEEKQRRDAEAEAERRRKEEEELEEANYTLRA) adopt a coiled-coil conformation. Residues 156–199 (SENEKERNRREREEQQTKERERRLEEEKQRRDAEAEAERRRKEE) are compositionally biased toward basic and acidic residues. The segment covering 251-279 (IASSTPQQKQRLADGANNQIPPTQKSQDS) has biased composition (polar residues). Composition is skewed to basic and acidic residues over residues 359-385 (EPRHRSSSRDGYEQSRYSQRYEHDNSR), 394-444 (RRHE…RGRD), and 453-480 (VRFEEEHRRHGDEYRDPRGPRDYNDYGR). Residues 491 to 549 (EDEEKLNAIVRREKELRNRLQKSQKASSSSYRHRSNSSDAEESLNEWDIENQELLDNSM) are a coiled coil. A compositionally biased stretch (low complexity) spans 511 to 520 (QKSQKASSSS). Positions 573 to 583 (RSKPANSTKSP) are enriched in polar residues. The span at 592 to 601 (ASLEDNRDLN) shows a compositional bias: basic and acidic residues. A Myb-like domain is found at 617 to 678 (VAKKITWRKQ…AITRLKWVEP (62 aa)). Disordered regions lie at residues 757-785 (RGGTRASIMPKPVEDSPMSRGNNSTFNSP) and 808-877 (MQAR…TSIY). 2 stretches are compositionally biased toward polar residues: residues 775–785 (SRGNNSTFNSP) and 819–836 (SSSMNNSTYRGNKNTSIS). Acidic residues predominate over residues 856 to 871 (EDDENEDNDDDDDMRE).

Belongs to the KNL2 family. As to quaternary structure, interacts with hcp-3.

It localises to the nucleus. The protein resides in the chromosome. It is found in the centromere. Its subcellular location is the kinetochore. Required for the recruitment of hcp-3, hcp-4, knl-1, bub-1 and lin-53 to kinetochores, kinetochore assembly, chromosome condensation and chromosome segregation in meiosis and mitosis. The polypeptide is Kinetochore null protein 2 (Caenorhabditis elegans).